Reading from the N-terminus, the 255-residue chain is 5'-nucleotidase SurE (255 aa).

Residues D8, D9, S40, and N93 each coordinate a divalent metal cation.

It belongs to the SurE nucleotidase family. The cofactor is a divalent metal cation.

The protein resides in the cytoplasm. The enzyme catalyses a ribonucleoside 5'-phosphate + H2O = a ribonucleoside + phosphate. Nucleotidase that shows phosphatase activity on nucleoside 5'-monophosphates. This Nitrobacter winogradskyi (strain ATCC 25391 / DSM 10237 / CIP 104748 / NCIMB 11846 / Nb-255) protein is 5'-nucleotidase SurE.